The primary structure comprises 493 residues: Galactose-1-phosphate uridylyltransferase (493 aa).

It belongs to the galactose-1-phosphate uridylyltransferase type 2 family.

It is found in the cytoplasm. The enzyme catalyses alpha-D-galactose 1-phosphate + UDP-alpha-D-glucose = alpha-D-glucose 1-phosphate + UDP-alpha-D-galactose. The protein operates within carbohydrate metabolism; galactose metabolism. The chain is Galactose-1-phosphate uridylyltransferase from Streptococcus thermophilus (strain ATCC BAA-250 / LMG 18311).